A 501-amino-acid chain; its full sequence is GMP synthase [glutamine-hydrolyzing] (501 aa).

In terms of domain architecture, Glutamine amidotransferase type-1 spans 1 to 185 (MVLVVDYGSQ…LFNVCKLEKN (185 aa)). Residue Cys-75 is the Nucleophile of the active site. Active-site residues include His-159 and Glu-161. Residues 186–376 (WKIGDLVEEK…LGIPDRIINR (191 aa)) form the GMPS ATP-PPase domain. ATP is bound at residue 213 to 219 (SGGVDSS).

In terms of assembly, homodimer.

The enzyme catalyses XMP + L-glutamine + ATP + H2O = GMP + L-glutamate + AMP + diphosphate + 2 H(+). Its pathway is purine metabolism; GMP biosynthesis; GMP from XMP (L-Gln route): step 1/1. Its function is as follows. Catalyzes the synthesis of GMP from XMP. The sequence is that of GMP synthase [glutamine-hydrolyzing] (guaA) from Thermotoga maritima (strain ATCC 43589 / DSM 3109 / JCM 10099 / NBRC 100826 / MSB8).